We begin with the raw amino-acid sequence, 709 residues long: D-(-)-3-hydroxybutyrate oligomer hydrolase (709 aa).

A signal peptide spans methionine 1–alanine 26. The interval glycine 58–proline 77 is disordered. The Charge relay system role is filled by serine 305.

Belongs to the D-(-)-3-hydroxybutyrate oligomer hydrolase family.

It is found in the secreted. The catalysed reaction is (3R)-hydroxybutanoate dimer + H2O = 2 (R)-3-hydroxybutanoate + H(+). It functions in the pathway lipid metabolism; butanoate metabolism. Its function is as follows. Participates in the degradation of poly-3-hydroxybutyrate (PHB). It works downstream of poly(3-hydroxybutyrate) depolymerase, hydrolyzing D(-)-3-hydroxybutyrate oligomers of various length (3HB-oligomers) into 3HB-monomers. This is D-(-)-3-hydroxybutyrate oligomer hydrolase from Paracidovorax citrulli (strain AAC00-1) (Acidovorax citrulli).